The primary structure comprises 270 residues: 2-C-methyl-D-erythritol 4-phosphate cytidylyltransferase (270 aa).

The interval 1–33 (MSDESRPSPAETPATTFAETSAETSAAGRSPAR) is disordered. Over residues 7–27 (PSPAETPATTFAETSAETSAA) the composition is skewed to low complexity.

This sequence belongs to the IspD/TarI cytidylyltransferase family. IspD subfamily.

The enzyme catalyses 2-C-methyl-D-erythritol 4-phosphate + CTP + H(+) = 4-CDP-2-C-methyl-D-erythritol + diphosphate. It functions in the pathway isoprenoid biosynthesis; isopentenyl diphosphate biosynthesis via DXP pathway; isopentenyl diphosphate from 1-deoxy-D-xylulose 5-phosphate: step 2/6. Catalyzes the formation of 4-diphosphocytidyl-2-C-methyl-D-erythritol from CTP and 2-C-methyl-D-erythritol 4-phosphate (MEP). The sequence is that of 2-C-methyl-D-erythritol 4-phosphate cytidylyltransferase from Streptomyces coelicolor (strain ATCC BAA-471 / A3(2) / M145).